The following is a 349-amino-acid chain: Holliday junction branch migration complex subunit RuvB (349 aa).

Basic and acidic residues predominate over residues 1 to 15; sequence MSDDYRETDPTRQPE. Positions 1-25 are disordered; that stretch reads MSDDYRETDPTRQPEDMGEGSLRPE. The interval 1-183 is large ATPase domain (RuvB-L); sequence MSDDYRETDP…FGIPLRLVFY (183 aa). ATP-binding positions include leucine 22, arginine 23, glycine 64, lysine 67, threonine 68, threonine 69, 130–132, arginine 173, tyrosine 183, and arginine 220; that span reads EDF. Threonine 68 contributes to the Mg(2+) binding site. Residues 184 to 254 form a small ATPAse domain (RuvB-S) region; it reads TPEELRAIVS…LADAALGRLE (71 aa). The tract at residues 257-349 is head domain (RuvB-H); the sequence is ERGLDAMDRR…SSLEQDDSAP (93 aa). 3 residues coordinate DNA: arginine 293, arginine 312, and arginine 317.

The protein belongs to the RuvB family. Homohexamer. Forms an RuvA(8)-RuvB(12)-Holliday junction (HJ) complex. HJ DNA is sandwiched between 2 RuvA tetramers; dsDNA enters through RuvA and exits via RuvB. An RuvB hexamer assembles on each DNA strand where it exits the tetramer. Each RuvB hexamer is contacted by two RuvA subunits (via domain III) on 2 adjacent RuvB subunits; this complex drives branch migration. In the full resolvosome a probable DNA-RuvA(4)-RuvB(12)-RuvC(2) complex forms which resolves the HJ.

Its subcellular location is the cytoplasm. The enzyme catalyses ATP + H2O = ADP + phosphate + H(+). Functionally, the RuvA-RuvB-RuvC complex processes Holliday junction (HJ) DNA during genetic recombination and DNA repair, while the RuvA-RuvB complex plays an important role in the rescue of blocked DNA replication forks via replication fork reversal (RFR). RuvA specifically binds to HJ cruciform DNA, conferring on it an open structure. The RuvB hexamer acts as an ATP-dependent pump, pulling dsDNA into and through the RuvAB complex. RuvB forms 2 homohexamers on either side of HJ DNA bound by 1 or 2 RuvA tetramers; 4 subunits per hexamer contact DNA at a time. Coordinated motions by a converter formed by DNA-disengaged RuvB subunits stimulates ATP hydrolysis and nucleotide exchange. Immobilization of the converter enables RuvB to convert the ATP-contained energy into a lever motion, pulling 2 nucleotides of DNA out of the RuvA tetramer per ATP hydrolyzed, thus driving DNA branch migration. The RuvB motors rotate together with the DNA substrate, which together with the progressing nucleotide cycle form the mechanistic basis for DNA recombination by continuous HJ branch migration. Branch migration allows RuvC to scan DNA until it finds its consensus sequence, where it cleaves and resolves cruciform DNA. The chain is Holliday junction branch migration complex subunit RuvB from Gluconobacter oxydans (strain 621H) (Gluconobacter suboxydans).